The primary structure comprises 490 residues: Protein nucleotidyltransferase YdiU (490 aa).

ATP contacts are provided by Gly94, Gly96, Arg97, Lys117, Asp129, Gly130, Arg180, and Arg187. Asp256 serves as the catalytic Proton acceptor. Residues Asn257 and Asp266 each contribute to the Mg(2+) site. Asp266 provides a ligand contact to ATP.

This sequence belongs to the SELO family. The cofactor is Mg(2+). Requires Mn(2+) as cofactor.

It carries out the reaction L-seryl-[protein] + ATP = 3-O-(5'-adenylyl)-L-seryl-[protein] + diphosphate. The enzyme catalyses L-threonyl-[protein] + ATP = 3-O-(5'-adenylyl)-L-threonyl-[protein] + diphosphate. It catalyses the reaction L-tyrosyl-[protein] + ATP = O-(5'-adenylyl)-L-tyrosyl-[protein] + diphosphate. The catalysed reaction is L-histidyl-[protein] + UTP = N(tele)-(5'-uridylyl)-L-histidyl-[protein] + diphosphate. It carries out the reaction L-seryl-[protein] + UTP = O-(5'-uridylyl)-L-seryl-[protein] + diphosphate. The enzyme catalyses L-tyrosyl-[protein] + UTP = O-(5'-uridylyl)-L-tyrosyl-[protein] + diphosphate. Functionally, nucleotidyltransferase involved in the post-translational modification of proteins. It can catalyze the addition of adenosine monophosphate (AMP) or uridine monophosphate (UMP) to a protein, resulting in modifications known as AMPylation and UMPylation. The protein is Protein nucleotidyltransferase YdiU of Clostridium beijerinckii (strain ATCC 51743 / NCIMB 8052) (Clostridium acetobutylicum).